Consider the following 74-residue polypeptide: MGGISIWNLVIIVLLVVLLFGTKKLRGLGSDLGESIKGFKKAMNDDKAKDAEFEKVEQKTAESTEQKAKEKEQA.

The chain crosses the membrane as a helical span at residues 1-21 (MGGISIWNLVIIVLLVVLLFG). The interval 51–74 (AEFEKVEQKTAESTEQKAKEKEQA) is disordered.

This sequence belongs to the TatA/E family. In terms of assembly, the Tat system comprises two distinct complexes: a TatABC complex, containing multiple copies of TatA, TatB and TatC subunits, and a separate TatA complex, containing only TatA subunits. Substrates initially bind to the TatABC complex, which probably triggers association of the separate TatA complex to form the active translocon.

Its subcellular location is the cell inner membrane. In terms of biological role, part of the twin-arginine translocation (Tat) system that transports large folded proteins containing a characteristic twin-arginine motif in their signal peptide across membranes. TatA could form the protein-conducting channel of the Tat system. This is Sec-independent protein translocase protein TatA from Glaesserella parasuis serovar 5 (strain SH0165) (Haemophilus parasuis).